The following is a 215-amino-acid chain: N-(5'-phosphoribosyl)anthranilate isomerase (215 aa).

This sequence belongs to the TrpF family.

It carries out the reaction N-(5-phospho-beta-D-ribosyl)anthranilate = 1-(2-carboxyphenylamino)-1-deoxy-D-ribulose 5-phosphate. Its pathway is amino-acid biosynthesis; L-tryptophan biosynthesis; L-tryptophan from chorismate: step 3/5. The polypeptide is N-(5'-phosphoribosyl)anthranilate isomerase (Parvibaculum lavamentivorans (strain DS-1 / DSM 13023 / NCIMB 13966)).